The chain runs to 561 residues: Dihydroxy-acid dehydratase 2 (561 aa).

Cys53 is a [2Fe-2S] cluster binding site. Asp85 contacts Mg(2+). Cys126 lines the [2Fe-2S] cluster pocket. 2 residues coordinate Mg(2+): Asp127 and Lys128. The residue at position 128 (Lys128) is an N6-carboxylysine. Cys195 contributes to the [2Fe-2S] cluster binding site. Mg(2+) is bound at residue Glu446. The active-site Proton acceptor is the Ser472.

The protein belongs to the IlvD/Edd family. As to quaternary structure, homodimer. [2Fe-2S] cluster is required as a cofactor. The cofactor is Mg(2+).

The enzyme catalyses (2R)-2,3-dihydroxy-3-methylbutanoate = 3-methyl-2-oxobutanoate + H2O. It catalyses the reaction (2R,3R)-2,3-dihydroxy-3-methylpentanoate = (S)-3-methyl-2-oxopentanoate + H2O. Its pathway is amino-acid biosynthesis; L-isoleucine biosynthesis; L-isoleucine from 2-oxobutanoate: step 3/4. It functions in the pathway amino-acid biosynthesis; L-valine biosynthesis; L-valine from pyruvate: step 3/4. Its function is as follows. Functions in the biosynthesis of branched-chain amino acids. Catalyzes the dehydration of (2R,3R)-2,3-dihydroxy-3-methylpentanoate (2,3-dihydroxy-3-methylvalerate) into 2-oxo-3-methylpentanoate (2-oxo-3-methylvalerate) and of (2R)-2,3-dihydroxy-3-methylbutanoate (2,3-dihydroxyisovalerate) into 2-oxo-3-methylbutanoate (2-oxoisovalerate), the penultimate precursor to L-isoleucine and L-valine, respectively. This is Dihydroxy-acid dehydratase 2 from Acinetobacter baylyi (strain ATCC 33305 / BD413 / ADP1).